The chain runs to 1151 residues: Nardilysin (1151 aa).

The N-terminal stretch at 1 to 20 (MLRRVTVAAVCATRRKLCEA) is a signal peptide. Disordered regions lie at residues 53–108 (RNKA…KSPS) and 133–207 (MEGK…KKTT). Residues serine 86, serine 94, and serine 96 each carry the phosphoserine modification. The span at 141–198 (TDDEEEEEVEEEEEDDDEDSGAEIEDDDEEGFDDEDEFDDEHDDDLDTEDNELEELEE) shows a compositional bias: acidic residues. Histidine 233 contacts Zn(2+). Glutamate 236 acts as the Proton acceptor in catalysis. The Zn(2+) site is built by histidine 237 and glutamate 314.

This sequence belongs to the peptidase M16 family. Interacts with BACE1 and NRG1. Requires Zn(2+) as cofactor. In terms of tissue distribution, primarily in adult heart, skeletal muscle, and testis and at much lower levels in other tissues.

Its subcellular location is the mitochondrion. The protein resides in the cell projection. It localises to the dendrite. It catalyses the reaction Hydrolysis of polypeptides, preferably at -Xaa-|-Arg-Lys-, and less commonly at -Arg-|-Arg-Xaa-, in which Xaa is not Arg or Lys.. Cleaves peptide substrates on the N-terminus of arginine residues in dibasic pairs. Is a critical activator of BACE1- and ADAM17-mediated pro-neuregulin ectodomain shedding, involved in the positive regulation of axonal maturation and myelination. Required for proper functioning of 2-oxoglutarate dehydrogenase (OGDH). The chain is Nardilysin from Homo sapiens (Human).